Reading from the N-terminus, the 400-residue chain is Probable phospho-2-dehydro-3-deoxyheptonate aldolase (400 aa).

The protein belongs to the class-II DAHP synthase family.

The catalysed reaction is D-erythrose 4-phosphate + phosphoenolpyruvate + H2O = 7-phospho-2-dehydro-3-deoxy-D-arabino-heptonate + phosphate. The protein operates within antibiotic biosynthesis; phenazine biosynthesis. The sequence is that of Probable phospho-2-dehydro-3-deoxyheptonate aldolase (phzC) from Pseudomonas fluorescens.